The chain runs to 433 residues: MIKLEMDFVLSEKLWKEAQEIFPGGVNSPVRSFQSVGGFPFYVSRAKGSKITDVDGNDYTDYVCSWGALIHGHAHPAVVRAVGEALKDGTSYGANSPLEIKLARLIQSAMPSIEKIRFVNSGTEACMTAIRIARGVSGREKIMKFEGCYHGHSDSLLVKAGSGALTTAVPNSAGIPPCLSSLTLVLPWNDRQTLLEAFKRQGKETAAVILEPVLANCGLIPPEEGFLECLFKTAREYGTLVIFDEVITGFRLALGGAQEIFGIQPDLTVLGKIIGGGLPVGAVGGKKEIMDSLSPLGSVYQAGTLSGNPLAMAAGIAQLEQIKKAPPYSHLETLGSELESAIKDIQRKLPIPFQFNRRGSLFSFFFTAKNIRSATDVYSVDKKRFSCFFTSLLHSGIFLPPSPFETAFLSTAHSETDIDELVKFVYDILKKMP.

Lys272 carries the post-translational modification N6-(pyridoxal phosphate)lysine.

The protein belongs to the class-III pyridoxal-phosphate-dependent aminotransferase family. HemL subfamily. As to quaternary structure, homodimer. Requires pyridoxal 5'-phosphate as cofactor.

Its subcellular location is the cytoplasm. It carries out the reaction (S)-4-amino-5-oxopentanoate = 5-aminolevulinate. Its pathway is porphyrin-containing compound metabolism; protoporphyrin-IX biosynthesis; 5-aminolevulinate from L-glutamyl-tRNA(Glu): step 2/2. The chain is Glutamate-1-semialdehyde 2,1-aminomutase from Methylacidiphilum infernorum (isolate V4) (Methylokorus infernorum (strain V4)).